The primary structure comprises 358 residues: Microbial Terpene synthase-like protein 13 (358 aa).

The protein belongs to the terpene synthase family.

Functionally, no terpene synthase activity detected in vitro. The chain is Microbial Terpene synthase-like protein 13 from Selaginella moellendorffii (Spikemoss).